A 934-amino-acid chain; its full sequence is Replication factor C subunit 1 (934 aa).

Residues 1 to 190 are disordered; sequence MSNSDIRSFF…RSSKSKGLPR (190 aa). A Phosphoserine modification is found at S27. Over residues 29–39 the composition is skewed to basic residues; sequence KPKRSLKKKRI. Over residues 89-104 the composition is skewed to polar residues; sequence GVSTTPDEYFEQQSTR. Residues 118–128 are compositionally biased toward basic and acidic residues; the sequence is TTSKDVVHPVK. Low complexity predominate over residues 165-186; it reads TSKSKSHTTTATTHTSRSSKSK. Residues 236-326 form the BRCT domain; the sequence is GNSDCLSGIS…PASGGTGAAA (91 aa). Residues T362, C374, 416-423, and N519 contribute to the ATP site; that span reads GPPGIGKT. Residues 876–895 show a composition bias toward acidic residues; it reads AEDEMLEEASDSEAANEEDI. The interval 876–934 is disordered; sequence AEDEMLEEASDSEAANEEDIDLSKDKFISVPKKPKKRTKAKAEASSSSSTSRRSRKKTA.

It belongs to the activator 1 large subunit family. As to quaternary structure, heteropentamer of subunits rfc1, rfc2, rfc3, rfc4 and rfc5 that forms a complex (RFC) with PCNA in the presence of ATP. Interacts with cdc24.

Its subcellular location is the nucleus. The protein localises to the nucleolus. Functionally, the elongation of primed DNA templates by DNA polymerase delta and epsilon requires the action of the accessory proteins PCNA and activator 1. Subunit 1 is essential for cell cycle progression. It may associate with components of the DNA replication machinery and serve to enhance the efficiency of DNA replication. The sequence is that of Replication factor C subunit 1 (rfc1) from Schizosaccharomyces pombe (strain 972 / ATCC 24843) (Fission yeast).